Here is a 431-residue protein sequence, read N- to C-terminus: Serine hydroxymethyltransferase (431 aa).

(6S)-5,6,7,8-tetrahydrofolate contacts are provided by residues L128 and 132 to 134; that span reads GHL. K237 bears the N6-(pyridoxal phosphate)lysine mark.

This sequence belongs to the SHMT family. In terms of assembly, homodimer. The cofactor is pyridoxal 5'-phosphate.

The protein localises to the cytoplasm. The enzyme catalyses (6R)-5,10-methylene-5,6,7,8-tetrahydrofolate + glycine + H2O = (6S)-5,6,7,8-tetrahydrofolate + L-serine. Its pathway is one-carbon metabolism; tetrahydrofolate interconversion. The protein operates within amino-acid biosynthesis; glycine biosynthesis; glycine from L-serine: step 1/1. Catalyzes the reversible interconversion of serine and glycine with tetrahydrofolate (THF) serving as the one-carbon carrier. This reaction serves as the major source of one-carbon groups required for the biosynthesis of purines, thymidylate, methionine, and other important biomolecules. Also exhibits THF-independent aldolase activity toward beta-hydroxyamino acids, producing glycine and aldehydes, via a retro-aldol mechanism. The protein is Serine hydroxymethyltransferase of Ruegeria pomeroyi (strain ATCC 700808 / DSM 15171 / DSS-3) (Silicibacter pomeroyi).